Here is a 57-residue protein sequence, read N- to C-terminus: Preprotein translocase subunit SecG (57 aa).

At 1 to 31 (MAKKKGEGPGLMSSAGLMRYFESEETSIKLD) the chain is on the cytoplasmic side. A helical transmembrane segment spans residues 32 to 53 (PKMVIGAGIASGVAIMALNITF). The Extracellular portion of the chain corresponds to 54–57 (GLWP).

The protein belongs to the SEC61-beta family. In terms of assembly, component of the protein translocase complex. Heterotrimer consisting of alpha (SecY), beta (SecG) and gamma (SecE) subunits. Can form oligomers of the heterotrimer.

It localises to the cell membrane. Functionally, involved in protein export. The function of the beta subunit is unknown, but it may be involved in stabilization of the trimeric complex. This chain is Preprotein translocase subunit SecG, found in Methanothrix thermoacetophila (strain DSM 6194 / JCM 14653 / NBRC 101360 / PT) (Methanosaeta thermophila).